The sequence spans 116 residues: Large ribosomal subunit protein bL19 (116 aa).

This sequence belongs to the bacterial ribosomal protein bL19 family.

This protein is located at the 30S-50S ribosomal subunit interface and may play a role in the structure and function of the aminoacyl-tRNA binding site. In Blochmanniella pennsylvanica (strain BPEN), this protein is Large ribosomal subunit protein bL19.